The following is a 614-amino-acid chain: Baeyer-Villiger monooxygenase peniC (614 aa).

Residues glutamate 99, 107–110 (TWHW), aspartate 119, and tyrosine 125 contribute to the FAD site. Residues 255–261 (TGASGVQ), 278–279 (RT), and 398–399 (KR) each bind NADP(+).

This sequence belongs to the FAD-binding monooxygenase family. FAD is required as a cofactor.

It catalyses the reaction gamma-lactone-2-keto[5.5.5.5]fenestrane + NADPH + O2 + H(+) = penifulvin A + NADP(+) + H2O. The protein operates within secondary metabolite biosynthesis; terpenoid biosynthesis. Baeyer-Villiger monooxygenase; part of the gene cluster that mediates the biosynthesis of penifulvin A, a potent insecticidal sesquiterpene that features a [5.5.5.6]dioxafenestrane ring. Within the pathway, peniC is responsible for the final regioselective Baeyer-Villiger oxidation of gamma-lactone-2-keto[5.5.5.5]fenestran between C1 and C2 to form the delta-lactone moiety of penifulvin A. The first step of the pathway is performed by the sesquiterpene cyclase peniA that generates the angular triquinane scaffold silphinene via cyclization of the linear farnesyl pyrophosphate (FPP). The cytochrome P450 monooxygenase peniB and the flavin-dependent monooxygenase peniC then catalyze a series of oxidation reactions to transform silphinene into penifulvin A. The polypeptide is Baeyer-Villiger monooxygenase peniC (Penicillium patulum (Penicillium griseofulvum)).